Consider the following 178-residue polypeptide: Ribulose bisphosphate carboxylase small subunit, chloroplastic 2 (178 aa).

The transit peptide at 1–54 directs the protein to the chloroplast; the sequence is MASISSTVATVSRAAPAQANMVAPFTGLKSNVAFPATKKANDFSTLPSNGGRVQ.

Belongs to the RuBisCO small chain family. Heterohexadecamer of 8 large and 8 small subunits.

It is found in the plastid. Its subcellular location is the chloroplast. Functionally, ruBisCO catalyzes two reactions: the carboxylation of D-ribulose 1,5-bisphosphate, the primary event in carbon dioxide fixation, as well as the oxidative fragmentation of the pentose substrate. Both reactions occur simultaneously and in competition at the same active site. Although the small subunit is not catalytic it is essential for maximal activity. The polypeptide is Ribulose bisphosphate carboxylase small subunit, chloroplastic 2 (Flaveria pringlei).